The following is a 448-amino-acid chain: MTATASPSDTKGAAAPRISFVSLGCPKALVDSERILTHLRAEGYELSRRHDGADVVIVNTCGFLDSAKAESLAAIGEAMAENGRVIVTGCMGAQPEEIREKYPNLLAVTGPQAYESVVAAVHEAVPPAHDPFLDLIPPQGVKLTPRHYAYLKISEGCNNRCTFCIIPSLRGDLVSRPAGDVLREAEKLVKAGVKELLVVSQDTSAYGIDTRYASSPWQDREVRARFYDLAKELGELGAWVRLHYVYPYPHVDEVIPLMAEGKILPYLDMPLQHASPSVLKRMRRPGNQEKQLDRIRRWREICPDLAIRSTFIVGFPGETDAEFEELLDWIREARLERVGCFEYEPVRGATANDLGLLVPPEVKAERKRRFMEAQSHVSLRLQRAKVGKRLSVIIDEAGPTGARGRSKADAPEIDGSVHVTSRRPVRPGDIVTVKIERADAYDLHGIAV.

In terms of domain architecture, MTTase N-terminal spans 16 to 126 (PRISFVSLGC…VVAAVHEAVP (111 aa)). [4Fe-4S] cluster is bound by residues cysteine 25, cysteine 61, cysteine 90, cysteine 157, cysteine 161, and cysteine 164. The Radical SAM core domain occupies 143–380 (LTPRHYAYLK…MEAQSHVSLR (238 aa)). The region spanning 383-448 (RAKVGKRLSV…DAYDLHGIAV (66 aa)) is the TRAM domain.

Belongs to the methylthiotransferase family. RimO subfamily. [4Fe-4S] cluster is required as a cofactor.

It localises to the cytoplasm. It carries out the reaction L-aspartate(89)-[ribosomal protein uS12]-hydrogen + (sulfur carrier)-SH + AH2 + 2 S-adenosyl-L-methionine = 3-methylsulfanyl-L-aspartate(89)-[ribosomal protein uS12]-hydrogen + (sulfur carrier)-H + 5'-deoxyadenosine + L-methionine + A + S-adenosyl-L-homocysteine + 2 H(+). Catalyzes the methylthiolation of an aspartic acid residue of ribosomal protein uS12. The protein is Ribosomal protein uS12 methylthiotransferase RimO of Methylorubrum extorquens (strain PA1) (Methylobacterium extorquens).